The sequence spans 93 residues: Large ribosomal subunit protein uL23cz/uL23cy (93 aa).

It belongs to the universal ribosomal protein uL23 family. Part of the 50S ribosomal subunit.

It localises to the plastid. Its subcellular location is the chloroplast. Functionally, binds to 23S rRNA. The sequence is that of Large ribosomal subunit protein uL23cz/uL23cy (rpl23-A) from Drimys granadensis.